Here is a 227-residue protein sequence, read N- to C-terminus: ATP-dependent dethiobiotin synthetase BioD (227 aa).

13 to 18 (DIGKTY) is an ATP binding site. Thr17 contacts Mg(2+). Residue Lys38 is part of the active site. Ser42 provides a ligand contact to substrate. ATP is bound by residues Asp55, 116–119 (EGSG), and 179–180 (NN). Asp55 and Glu116 together coordinate Mg(2+).

It belongs to the dethiobiotin synthetase family. As to quaternary structure, homodimer. Mg(2+) is required as a cofactor.

The protein resides in the cytoplasm. It catalyses the reaction (7R,8S)-7,8-diammoniononanoate + CO2 + ATP = (4R,5S)-dethiobiotin + ADP + phosphate + 3 H(+). It functions in the pathway cofactor biosynthesis; biotin biosynthesis; biotin from 7,8-diaminononanoate: step 1/2. In terms of biological role, catalyzes a mechanistically unusual reaction, the ATP-dependent insertion of CO2 between the N7 and N8 nitrogen atoms of 7,8-diaminopelargonic acid (DAPA, also called 7,8-diammoniononanoate) to form a ureido ring. This Clostridium botulinum (strain 657 / Type Ba4) protein is ATP-dependent dethiobiotin synthetase BioD.